We begin with the raw amino-acid sequence, 291 residues long: Ribose-phosphate pyrophosphokinase (291 aa).

ATP is bound by residues 34-36 (DGE) and 93-94 (RQ). H127 and D165 together coordinate Mg(2+). Residue K188 is part of the active site. Residues R190, D216, and 220–224 (STGGT) contribute to the D-ribose 5-phosphate site.

This sequence belongs to the ribose-phosphate pyrophosphokinase family. Class III (archaeal) subfamily. Requires Mg(2+) as cofactor.

It is found in the cytoplasm. The enzyme catalyses D-ribose 5-phosphate + ATP = 5-phospho-alpha-D-ribose 1-diphosphate + AMP + H(+). Its pathway is metabolic intermediate biosynthesis; 5-phospho-alpha-D-ribose 1-diphosphate biosynthesis; 5-phospho-alpha-D-ribose 1-diphosphate from D-ribose 5-phosphate (route I): step 1/1. Its function is as follows. Involved in the biosynthesis of the central metabolite phospho-alpha-D-ribosyl-1-pyrophosphate (PRPP) via the transfer of pyrophosphoryl group from ATP to 1-hydroxyl of ribose-5-phosphate (Rib-5-P). The polypeptide is Ribose-phosphate pyrophosphokinase (Sulfurisphaera tokodaii (strain DSM 16993 / JCM 10545 / NBRC 100140 / 7) (Sulfolobus tokodaii)).